A 223-amino-acid polypeptide reads, in one-letter code: Peptidyl-prolyl cis-trans isomerase FKBP16-3, chloroplastic (223 aa).

The N-terminal 36 residues, 1–36 (MAASSPSLLLPLGSASRNGLTTKNPNSSRYIAARVI), are a transit peptide targeting the chloroplast. A thylakoid-targeting transit peptide spans 37 to 76 (ASETREQSCKISNLSSRREAMLLVLGVSGGLSMSSLAAYA). In terms of domain architecture, PPIase FKBP-type spans 124–216 (GFQVAANYVA…IFDVSLEFIP (93 aa)).

Belongs to the FKBP-type PPIase family.

Its subcellular location is the plastid. The protein resides in the chloroplast thylakoid lumen. The enzyme catalyses [protein]-peptidylproline (omega=180) = [protein]-peptidylproline (omega=0). Its function is as follows. PPIases accelerate the folding of proteins. It catalyzes the cis-trans isomerization of proline imidic peptide bonds in oligopeptides. The sequence is that of Peptidyl-prolyl cis-trans isomerase FKBP16-3, chloroplastic (FKBP16-3) from Arabidopsis thaliana (Mouse-ear cress).